We begin with the raw amino-acid sequence, 160 residues long: Phosphopantetheine adenylyltransferase (160 aa).

Ser9 contributes to the substrate binding site. Residues 9–10 (SF) and His17 contribute to the ATP site. Substrate is bound by residues Lys41, Ile73, and Lys87. Residues 88 to 90 (GLR), Glu98, and 122 to 128 (YSFVSSS) each bind ATP.

Belongs to the bacterial CoaD family. In terms of assembly, homohexamer. The cofactor is Mg(2+).

It is found in the cytoplasm. The enzyme catalyses (R)-4'-phosphopantetheine + ATP + H(+) = 3'-dephospho-CoA + diphosphate. The protein operates within cofactor biosynthesis; coenzyme A biosynthesis; CoA from (R)-pantothenate: step 4/5. Its function is as follows. Reversibly transfers an adenylyl group from ATP to 4'-phosphopantetheine, yielding dephospho-CoA (dPCoA) and pyrophosphate. In Mycolicibacterium gilvum (strain PYR-GCK) (Mycobacterium gilvum (strain PYR-GCK)), this protein is Phosphopantetheine adenylyltransferase.